A 625-amino-acid chain; its full sequence is Vacuolar-sorting receptor 7 (625 aa).

Residues 1-26 form the signal peptide; the sequence is MGLVNGRASLTFLLAALTIIAMVVEA. Topologically, residues 27–564 are lumenal; sequence RFVVEKESIS…CIERYGSKTA (538 aa). In terms of domain architecture, PA spans 58-166; the sequence is DYGGFLIGSV…SFGDDLRQGF (109 aa). Asn-292, Asn-400, and Asn-432 each carry an N-linked (GlcNAc...) asparagine glycan. EGF-like domains are found at residues 414–464 and 467–513; these read ETNE…TSCT and GPAR…LTCE. 7 disulfide bridges follow: Cys-418–Cys-436, Cys-425–Cys-445, Cys-447–Cys-463, Cys-471–Cys-491, Cys-478–Cys-499, Cys-501–Cys-512, and Cys-542–Cys-555. An EGF-like 3; calcium-binding domain is found at 514-556; sequence DINECKERSVCQCSGCRCKNSWGGYKCSCSGDRLYINDQDTCI. Residues 565–585 traverse the membrane as a helical segment; the sequence is WWLTFLILAIVAVAGLAGYIF. Over 586–625 the chain is Cytoplasmic; the sequence is YKYRFRSYMDSEIMTIMSQYMPLESQRAREVPSEAEPFTL. Positions 605 to 608 match the Tyrosine-based internalization motif motif; sequence YMPL.

This sequence belongs to the VSR (BP-80) family. Expressed at low levels in seedlings, roots, young leaves, flowers and siliques.

It localises to the golgi apparatus membrane. In terms of biological role, vacuolar-sorting receptor (VSR) involved in clathrin-coated vesicles sorting from Golgi apparatus to vacuoles. In Arabidopsis thaliana (Mouse-ear cress), this protein is Vacuolar-sorting receptor 7 (VSR7).